A 542-amino-acid polypeptide reads, in one-letter code: Phenylacetone monooxygenase (542 aa).

Residues serine 27, glutamate 46, 54–57, aspartate 66, tyrosine 72, valine 119, and glutamine 152 contribute to the FAD site; that span reads VWYW. Residue 64–66 participates in NADP(+) binding; that stretch reads RCD. Residues 194–200, 217–218, and 336–337 contribute to the NADP(+) site; these read TGSSGIQ, RT, and KR. An FAD-binding site is contributed by methionine 446. Tryptophan 501 is an NADP(+) binding site.

Belongs to the FAD-binding monooxygenase family. As to quaternary structure, monomer. The cofactor is FAD.

It carries out the reaction phenylacetone + NADPH + O2 + H(+) = benzyl acetate + NADP(+) + H2O. In terms of biological role, catalyzes a Baeyer-Villiger oxidation reaction, i.e. the insertion of an oxygen atom into a carbon-carbon bond adjacent to a carbonyl, which converts ketones to esters. Is most efficient with phenylacetone as substrate, leading to the formation of benzyl acetate. Can also oxidize other aromatic ketones (benzylacetone, alpha-methylphenylacetone and 4-hydroxyacetophenone), some aliphatic ketones (dodecan-2-one and bicyclohept-2-en-6-one) and sulfides (e.g. methyl 4-tolylsulfide). This chain is Phenylacetone monooxygenase (pamO), found in Thermobifida fusca (strain YX).